Here is a 93-residue protein sequence, read N- to C-terminus: uncharacterized protein (93 aa).

2 consecutive transmembrane segments (helical) span residues 8-28 (FIGIVKDILVLIASFGILLAS) and 54-74 (ACFLIFIALGETLLAFVYLIL).

The protein resides in the cell membrane. This is an uncharacterized protein from Methanocaldococcus jannaschii (strain ATCC 43067 / DSM 2661 / JAL-1 / JCM 10045 / NBRC 100440) (Methanococcus jannaschii).